A 464-amino-acid polypeptide reads, in one-letter code: Elongation factor 1-alpha (464 aa).

The tr-type G domain maps to 5 to 242; it reads KTHINIVVIG…DSVVPPQRPT (238 aa). GTP-binding positions include 14–21, 91–95, and 153–156; these read GHVDSGKS, DAPGH, and NKMD. 5-glutamyl glycerylphosphorylethanolamine occurs at positions 301 and 374.

This sequence belongs to the TRAFAC class translation factor GTPase superfamily. Classic translation factor GTPase family. EF-Tu/EF-1A subfamily.

Its subcellular location is the cytoplasm. In terms of biological role, this protein promotes the GTP-dependent binding of aminoacyl-tRNA to the A-site of ribosomes during protein biosynthesis. This chain is Elongation factor 1-alpha, found in Onchocerca volvulus.